Consider the following 413-residue polypeptide: Protein CDKN2AIP homolog B (413 aa).

The XRN2-binding (XTBD) domain maps to 21–118 (LERVRGQCES…TTRDELVAKV (98 aa)). Residues 118-266 (VKKRGNSSSN…PTRRFTTEHT (149 aa)) are disordered. Residues 183–193 (NKREAHSRTDV) are compositionally biased toward basic and acidic residues.

It belongs to the CARF family.

Its subcellular location is the nucleus. The protein resides in the nucleoplasm. Functionally, may regulate DNA damage response and cell proliferation. This Xenopus laevis (African clawed frog) protein is Protein CDKN2AIP homolog B (cdkn2aip-b).